The chain runs to 626 residues: Glycosyltransferase 25 family member (626 aa).

Residues 1 to 21 (MLKKQVFYGILLICAFVCIYG) form the signal peptide. N113, N234, N272, and N533 each carry an N-linked (GlcNAc...) asparagine glycan. Residues 623-626 (HQEL) carry the Prevents secretion from ER motif.

Belongs to the glycosyltransferase 25 family.

It is found in the endoplasmic reticulum lumen. The chain is Glycosyltransferase 25 family member from Drosophila pseudoobscura pseudoobscura (Fruit fly).